A 452-amino-acid polypeptide reads, in one-letter code: Oxygen-independent coproporphyrinogen III oxidase (452 aa).

Positions 45–278 constitute a Radical SAM core domain; sequence LDPAVPISVY…ANLAAKMFTE (234 aa). S-adenosyl-L-methionine is bound at residue Tyr-54. Residues Cys-60 and Cys-64 each contribute to the [4Fe-4S] cluster site. Phe-66 contributes to the S-adenosyl-L-methionine binding site. Cys-67 provides a ligand contact to [4Fe-4S] cluster. S-adenosyl-L-methionine is bound by residues Gly-111, 112–113, Glu-144, Gln-171, Arg-183, Asp-208, Ala-242, and Ile-328; that span reads GT.

The protein belongs to the anaerobic coproporphyrinogen-III oxidase family. In terms of assembly, monomer. [4Fe-4S] cluster serves as cofactor.

The protein resides in the cytoplasm. It carries out the reaction coproporphyrinogen III + 2 S-adenosyl-L-methionine = protoporphyrinogen IX + 2 5'-deoxyadenosine + 2 L-methionine + 2 CO2. Its pathway is porphyrin-containing compound metabolism; protoporphyrin-IX biosynthesis; protoporphyrinogen-IX from coproporphyrinogen-III (AdoMet route): step 1/1. Functionally, involved in the heme and chlorophyll biosynthesis. Catalyzes the anaerobic oxidative decarboxylation of propionate groups of rings A and B of coproporphyrinogen III to yield the vinyl groups in protoporphyrinogen IX. This is Oxygen-independent coproporphyrinogen III oxidase (hemN) from Cereibacter sphaeroides (strain ATCC 17025 / ATH 2.4.3) (Rhodobacter sphaeroides).